Here is a 653-residue protein sequence, read N- to C-terminus: Splicing factor 1 (653 aa).

Disordered regions lie at residues methionine 1 to leucine 44 and leucine 65 to leucine 94. An N-acetylalanine modification is found at alanine 2. At serine 14 the chain carries Phosphoserine. Positions lysine 15–arginine 19 match the Nuclear localization signal motif. Serine 20 is subject to Phosphoserine; by PKG. Phosphoserine occurs at positions 80 and 82. Position 87 is a phosphotyrosine (tyrosine 87). At serine 89 the chain carries Phosphoserine. In terms of domain architecture, KH spans methionine 141–isoleucine 222. The CCHC-type zinc finger occupies threonine 277–arginine 296. 2 disordered regions span residues valine 325–proline 584 and arginine 611–alanine 653. Residues proline 335–alanine 350 are compositionally biased toward low complexity. Over residues methionine 382–proline 394 the composition is skewed to gly residues. Pro residues-rich tracts occupy residues asparagine 418–methionine 447 and methionine 470–proline 499. Residues serine 515 to threonine 534 show a composition bias toward low complexity. Residues valine 567–proline 584 are compositionally biased toward pro residues.

This sequence belongs to the BBP/SF1 family. Binds U2AF2. Interacts with U1 snRNA. Interacts with RBM17. Binds EWSR1, FUS and TAF15. In terms of processing, phosphorylation on Ser-20 interferes with U2AF2 binding and spliceosome assembly. Detected at intermediate levels in spleen. Lower levels in heart, kidney, brain, liver, testis, bone marrow, adrenal gland, lymph nodes, pancreas and thymus.

It is found in the nucleus. Its function is as follows. Necessary for the ATP-dependent first step of spliceosome assembly. Binds to the intron branch point sequence (BPS) 5'-UACUAAC-3' of the pre-mRNA. May act as transcription repressor. This chain is Splicing factor 1 (Sf1), found in Mus musculus (Mouse).